A 504-amino-acid chain; its full sequence is Probable cytosol aminopeptidase (504 aa).

Mn(2+) is bound by residues lysine 276 and aspartate 281. The active site involves lysine 288. Aspartate 299, aspartate 358, and glutamate 360 together coordinate Mn(2+). Arginine 362 is an active-site residue.

This sequence belongs to the peptidase M17 family. The cofactor is Mn(2+).

It is found in the cytoplasm. The enzyme catalyses Release of an N-terminal amino acid, Xaa-|-Yaa-, in which Xaa is preferably Leu, but may be other amino acids including Pro although not Arg or Lys, and Yaa may be Pro. Amino acid amides and methyl esters are also readily hydrolyzed, but rates on arylamides are exceedingly low.. It catalyses the reaction Release of an N-terminal amino acid, preferentially leucine, but not glutamic or aspartic acids.. In terms of biological role, presumably involved in the processing and regular turnover of intracellular proteins. Catalyzes the removal of unsubstituted N-terminal amino acids from various peptides. The sequence is that of Probable cytosol aminopeptidase from Bordetella avium (strain 197N).